A 385-amino-acid polypeptide reads, in one-letter code: Probable caffeine synthase 3 (385 aa).

Residues Y18, C62, N67, D101, L102, S140, and F141 each coordinate S-adenosyl-L-homocysteine. 3 residues coordinate caffeine: Y158, Q161, and F162. N179 provides a ligand contact to Mg(2+). T238 provides a ligand contact to caffeine. Residues D261, F263, and N264 each contribute to the Mg(2+) site. Residue Y369 participates in caffeine binding.

The protein belongs to the methyltransferase superfamily. Type-7 methyltransferase family. The cofactor is Mg(2+). Expressed in roots, stems, young and old leaves.

It functions in the pathway alkaloid biosynthesis. Functionally, may be involved in the biosynthesis of caffeine. In Coffea arabica (Arabian coffee), this protein is Probable caffeine synthase 3.